Here is a 474-residue protein sequence, read N- to C-terminus: 3-isopropylmalate dehydratase large subunit (474 aa).

Residues cysteine 352, cysteine 413, and cysteine 416 each coordinate [4Fe-4S] cluster.

Belongs to the aconitase/IPM isomerase family. LeuC type 1 subfamily. As to quaternary structure, heterodimer of LeuC and LeuD. [4Fe-4S] cluster is required as a cofactor.

It catalyses the reaction (2R,3S)-3-isopropylmalate = (2S)-2-isopropylmalate. Its pathway is amino-acid biosynthesis; L-leucine biosynthesis; L-leucine from 3-methyl-2-oxobutanoate: step 2/4. Its function is as follows. Catalyzes the isomerization between 2-isopropylmalate and 3-isopropylmalate, via the formation of 2-isopropylmaleate. In Pseudomonas savastanoi pv. phaseolicola (strain 1448A / Race 6) (Pseudomonas syringae pv. phaseolicola (strain 1448A / Race 6)), this protein is 3-isopropylmalate dehydratase large subunit.